Consider the following 426-residue polypeptide: 26S proteasome regulatory subunit 7B (426 aa).

Position 209 to 216 (209 to 216 (GPPGTGKT)) interacts with ATP.

Belongs to the AAA ATPase family.

The protein localises to the cytoplasm. It is found in the nucleus. The 26S proteasome is involved in the ATP-dependent degradation of ubiquitinated proteins. The regulatory (or ATPase) complex confers ATP dependency and substrate specificity to the 26S complex. The chain is 26S proteasome regulatory subunit 7B (RPT1B) from Oryza sativa subsp. japonica (Rice).